A 610-amino-acid polypeptide reads, in one-letter code: Aspartate--tRNA(Asp/Asn) ligase (610 aa).

Glutamate 182 lines the L-aspartate pocket. Positions glutamine 206 to lysine 209 are aspartate. Residue arginine 228 coordinates L-aspartate. ATP contacts are provided by residues arginine 228–glutamate 230 and glutamine 237. Residue histidine 470 participates in L-aspartate binding. An ATP-binding site is contributed by glutamate 506. An L-aspartate-binding site is contributed by arginine 513. Residue glycine 558–arginine 561 participates in ATP binding.

This sequence belongs to the class-II aminoacyl-tRNA synthetase family. Type 1 subfamily. Homodimer.

It is found in the cytoplasm. The catalysed reaction is tRNA(Asx) + L-aspartate + ATP = L-aspartyl-tRNA(Asx) + AMP + diphosphate. Its function is as follows. Aspartyl-tRNA synthetase with relaxed tRNA specificity since it is able to aspartylate not only its cognate tRNA(Asp) but also tRNA(Asn). Reaction proceeds in two steps: L-aspartate is first activated by ATP to form Asp-AMP and then transferred to the acceptor end of tRNA(Asp/Asn). The sequence is that of Aspartate--tRNA(Asp/Asn) ligase from Acidobacterium capsulatum (strain ATCC 51196 / DSM 11244 / BCRC 80197 / JCM 7670 / NBRC 15755 / NCIMB 13165 / 161).